A 218-amino-acid chain; its full sequence is THAP domain-containing protein 3 (218 aa).

A THAP-type zinc finger spans residues 1 to 82 (MPKSCAARQC…LKHNAVPTVF (82 aa)). Disordered regions lie at residues 97–120 (GGDS…PEGP) and 133–154 (ATEA…PGQP). The residue at position 100 (Ser-100) is a Phosphoserine. Positions 156–159 (DHSY) match the HCFC1-binding motif (HBM) motif.

As to quaternary structure, component of a THAP1/THAP3-HCFC1-OGT complex that contains at least, either THAP1 or THAP3, HCFC1 and OGT. Interacts directly with OGT and HCFC1 (via its HBM). Highest levels in heart, liver and kidney. Lower levels in brain and lung.

In terms of biological role, component of a THAP1/THAP3-HCFC1-OGT complex that is required for the regulation of the transcriptional activity of RRM1. The chain is THAP domain-containing protein 3 (Thap3) from Mus musculus (Mouse).